An 83-amino-acid polypeptide reads, in one-letter code: Small ribosomal subunit protein bS20 (83 aa).

This sequence belongs to the bacterial ribosomal protein bS20 family.

Its function is as follows. Binds directly to 16S ribosomal RNA. This Amoebophilus asiaticus (strain 5a2) protein is Small ribosomal subunit protein bS20.